The following is a 206-amino-acid chain: Delta and osm-11 homolog protein 1 (206 aa).

The protein is Delta and osm-11 homolog protein 1 (dos-1) of Caenorhabditis elegans.